The sequence spans 129 residues: Large ribosomal subunit protein bL12 (129 aa).

It belongs to the bacterial ribosomal protein bL12 family. As to quaternary structure, homodimer. Part of the ribosomal stalk of the 50S ribosomal subunit. Forms a multimeric L10(L12)X complex, where L10 forms an elongated spine to which 2 to 4 L12 dimers bind in a sequential fashion. Binds GTP-bound translation factors.

Its function is as follows. Forms part of the ribosomal stalk which helps the ribosome interact with GTP-bound translation factors. Is thus essential for accurate translation. The sequence is that of Large ribosomal subunit protein bL12 from Protochlamydia amoebophila (strain UWE25).